Reading from the N-terminus, the 193-residue chain is PBAN-type neuropeptides (193 aa).

The first 19 residues, 1-19 (MYGAVLPGLFFIFISCVVA), serve as a signal peptide directing secretion. The residue at position 46 (Ile-46) is an Isoleucine amide. A leucine amide mark is found at Leu-102 and Leu-122. The segment at 124 to 158 (RRLADDTPATPADQEMYRPDPEQIDSRTKYFSPRL) is disordered. Over residues 138-151 (EMYRPDPEQIDSRT) the composition is skewed to basic and acidic residues. A leucine amide mark is found at Leu-158 and Leu-168. Positions 186-193 (STNKTQST) are excised as a propeptide.

The protein belongs to the pyrokinin family. In terms of tissue distribution, expressed in the mandibular, maxillary and labial neuromeres of the male and female brain-subesophageal ganglions, in the corpora cardiaca and all around the corpora allata, and at a lower level in the brain near the calyx and pedunculus of the mushroom body (at protein level). Expressed in larvae and adult of both sexes (at protein level). As to expression, expressed in corpora cardiaca (CC), corpora allata (CA) and gnathal ganglion (GNG) (at protein level). Expression in CC and CA detected in most animals, in GNG in some (at protein level). Expression not detected in CC, CA, AL or GNG (at protein level). In terms of tissue distribution, expressed in corpora cardiaca (CC), corpora allata (CA), antennal lobe (AL) and gnathal ganglion (GNG) (at protein level). Expression in CC, CA and GNG detected in most animals, expression in AL detected in few (at protein level). As to expression, expressed in corpora cardiaca (CC), corpora allata (CA), antennal lobe (AL) and gnathal ganglion (GNG) (at protein level). Expression in CC, CA and GNG detected in all animals, expression in AL detected in some (at protein level). Expressed in corpora cardiaca (CC), corpora allata (CA), antennal lobe (AL) and gnathal ganglion (GNG) (at protein level). Expression in CC, CA and GNG detected in most animals, expression in AL detected in some animals (at protein level).

The protein resides in the secreted. A hormone that controls sex pheromone production in female moths and pheromone responsiveness in male. This chain is PBAN-type neuropeptides, found in Agrotis ipsilon (Black cutworm moth).